Consider the following 354-residue polypeptide: Peptide chain release factor 1 (354 aa).

Residue Gln230 is modified to N5-methylglutamine.

Belongs to the prokaryotic/mitochondrial release factor family. Methylated by PrmC. Methylation increases the termination efficiency of RF1.

The protein resides in the cytoplasm. Peptide chain release factor 1 directs the termination of translation in response to the peptide chain termination codons UAG and UAA. The chain is Peptide chain release factor 1 from Pelobacter propionicus (strain DSM 2379 / NBRC 103807 / OttBd1).